A 1564-amino-acid chain; its full sequence is Nucleoporin nup184 (1564 aa).

The protein localises to the nucleus. It localises to the nuclear pore complex. Its function is as follows. Interacts with pom152 in the core structure of the nuclear pore complex (NPC). Involved in the export of mRNA. This chain is Nucleoporin nup184 (nup184), found in Schizosaccharomyces pombe (strain 972 / ATCC 24843) (Fission yeast).